Here is a 377-residue protein sequence, read N- to C-terminus: uncharacterized protein (377 aa).

Residues 21–43 traverse the membrane as a helical segment; that stretch reads YFISFSALFLIAYMFVAAVPLGA.

The protein localises to the membrane. This is an uncharacterized protein from Treponema pallidum (strain Nichols).